Consider the following 261-residue polypeptide: Glucose 1-dehydrogenase 3 (261 aa).

Val-11–Val-35 contributes to the NAD(+) binding site. Ser-145 contacts substrate. Tyr-158 (proton acceptor) is an active-site residue.

The protein belongs to the short-chain dehydrogenases/reductases (SDR) family. Homotetramer.

It catalyses the reaction D-glucose + NAD(+) = D-glucono-1,5-lactone + NADH + H(+). It carries out the reaction D-glucose + NADP(+) = D-glucono-1,5-lactone + NADPH + H(+). This Priestia megaterium (Bacillus megaterium) protein is Glucose 1-dehydrogenase 3 (gdhIII).